We begin with the raw amino-acid sequence, 274 residues long: Triosephosphate isomerase (274 aa).

31 to 33 (NWK) serves as a coordination point for substrate. The active-site Electrophile is the His-118. Glu-188 serves as the catalytic Proton acceptor. Residues Gly-194, Ser-234, and 255 to 256 (GG) contribute to the substrate site.

This sequence belongs to the triosephosphate isomerase family. In terms of assembly, homodimer.

It is found in the cytoplasm. The catalysed reaction is D-glyceraldehyde 3-phosphate = dihydroxyacetone phosphate. The protein operates within carbohydrate biosynthesis; gluconeogenesis. It participates in carbohydrate degradation; glycolysis; D-glyceraldehyde 3-phosphate from glycerone phosphate: step 1/1. Its function is as follows. Involved in the gluconeogenesis. Catalyzes stereospecifically the conversion of dihydroxyacetone phosphate (DHAP) to D-glyceraldehyde-3-phosphate (G3P). The polypeptide is Triosephosphate isomerase (Chlamydia trachomatis serovar L2 (strain ATCC VR-902B / DSM 19102 / 434/Bu)).